An 85-amino-acid polypeptide reads, in one-letter code: Small ribosomal subunit protein bS18 (85 aa).

Over residues Met-1–Gln-12 the composition is skewed to gly residues. The segment at Met-1–Thr-22 is disordered.

It belongs to the bacterial ribosomal protein bS18 family. Part of the 30S ribosomal subunit. Forms a tight heterodimer with protein bS6.

Its function is as follows. Binds as a heterodimer with protein bS6 to the central domain of the 16S rRNA, where it helps stabilize the platform of the 30S subunit. The chain is Small ribosomal subunit protein bS18 from Azorhizobium caulinodans (strain ATCC 43989 / DSM 5975 / JCM 20966 / LMG 6465 / NBRC 14845 / NCIMB 13405 / ORS 571).